Consider the following 287-residue polypeptide: Transmembrane protein 71 (287 aa).

The tract at residues 1-25 (MYRDSPLMSTPVANDSRSDEGPSGK) is disordered. Transmembrane regions (helical) follow at residues 218–238 (AGLM…LVIS) and 244–264 (FVGG…IAYV).

This sequence belongs to the TMEM71 family.

It localises to the membrane. This is Transmembrane protein 71 (Tmem71) from Mus musculus (Mouse).